The sequence spans 142 residues: Transcription antitermination protein NusB (142 aa).

Belongs to the NusB family.

Its function is as follows. Involved in transcription antitermination. Required for transcription of ribosomal RNA (rRNA) genes. Binds specifically to the boxA antiterminator sequence of the ribosomal RNA (rrn) operons. The sequence is that of Transcription antitermination protein NusB from Buchnera aphidicola subsp. Cinara cedri (strain Cc).